We begin with the raw amino-acid sequence, 129 residues long: Serum amyloid A-2 protein (129 aa).

An N-terminal signal peptide occupies residues 1-18 (MKLFTGLIFCSLVLGVHS). Gln19 is modified (pyrrolidone carboxylic acid). Residues 90–103 (KHGDSGHGVEDSRA) are compositionally biased toward basic and acidic residues. The tract at residues 90 to 129 (KHGDSGHGVEDSRADQAANEWGRSGKDPNHFRPPGLPDKY) is disordered.

This sequence belongs to the SAA family. In terms of assembly, apolipoprotein of the HDL complex.

The protein resides in the secreted. Major acute phase reactant. This is Serum amyloid A-2 protein from Sus scrofa (Pig).